Reading from the N-terminus, the 443-residue chain is Ribulose bisphosphate carboxylase large chain (443 aa).

Substrate is bound by residues Asn-89 and Thr-139. Residue Lys-141 is the Proton acceptor of the active site. Position 143 (Lys-143) interacts with substrate. Mg(2+)-binding residues include Lys-167, Asp-169, and Glu-170. Position 167 is an N6-carboxylysine (Lys-167). The Proton acceptor role is filled by His-260. 3 residues coordinate substrate: Arg-261, His-293, and Ser-345.

It belongs to the RuBisCO large chain family. Type I subfamily. Heterohexadecamer of 8 large chains and 8 small chains; disulfide-linked. The disulfide link is formed within the large subunit homodimers. The cofactor is Mg(2+). The disulfide bond which can form in the large chain dimeric partners within the hexadecamer appears to be associated with oxidative stress and protein turnover.

The protein localises to the plastid. It localises to the chloroplast. It catalyses the reaction 2 (2R)-3-phosphoglycerate + 2 H(+) = D-ribulose 1,5-bisphosphate + CO2 + H2O. The catalysed reaction is D-ribulose 1,5-bisphosphate + O2 = 2-phosphoglycolate + (2R)-3-phosphoglycerate + 2 H(+). RuBisCO catalyzes two reactions: the carboxylation of D-ribulose 1,5-bisphosphate, the primary event in carbon dioxide fixation, as well as the oxidative fragmentation of the pentose substrate in the photorespiration process. Both reactions occur simultaneously and in competition at the same active site. This Antirrhinum majus (Garden snapdragon) protein is Ribulose bisphosphate carboxylase large chain.